We begin with the raw amino-acid sequence, 83 residues long: UPF0297 protein CKR_1221 (83 aa).

The protein belongs to the UPF0297 family.

The chain is UPF0297 protein CKR_1221 from Clostridium kluyveri (strain NBRC 12016).